A 287-amino-acid chain; its full sequence is Probable aquaporin PIP1-5 (287 aa).

The residue at position 1 (methionine 1) is an N-acetylmethionine. The disordered stretch occupies residues 1–34; that stretch reads MEGKEEDVNVGANKFPERQPIGTAAQTESKDYKE. Over 1–55 the chain is Cytoplasmic; it reads MEGKEEDVNVGANKFPERQPIGTAAQTESKDYKEPPPAPFFEPGELKSWSFYRAG. Residues 56 to 76 traverse the membrane as a helical segment; that stretch reads IAEFIATFLFLYVTVLTVMGV. At 77 to 92 the chain is on the extracellular side; it reads KRAPNMCASVGIQGIA. A helical transmembrane segment spans residues 93–113; it reads WAFGGMIFALVYCTAGISGGH. At 114-133 the chain is on the cytoplasmic side; that stretch reads INPAVTFGLFLARKLSLTRA. Residues 115–117 carry the NPA 1 motif; it reads NPA. The helical transmembrane segment at 134 to 154 threads the bilayer; that stretch reads LFYIVMQCLGAICGAGVVKGF. The Extracellular portion of the chain corresponds to 155–175; that stretch reads QPGLYQTNGGGANVVAHGYTK. Residues 176 to 196 traverse the membrane as a helical segment; that stretch reads GSGLGAEIVGTFVLVYTVFSA. Residues 197–209 lie on the Cytoplasmic side of the membrane; sequence TDAKRSARDSHVP. A helical membrane pass occupies residues 210–230; sequence ILAPLPIGFAVFLVHLATIPI. At 231 to 257 the chain is on the extracellular side; the sequence is TGTGINPARSLGAAIIYNKDHAWDDHW. The NPA 2 signature appears at 236–238; that stretch reads NPA. Residues 258–278 traverse the membrane as a helical segment; the sequence is IFWVGPFIGAALAALYHQIVI. Topologically, residues 279–287 are cytoplasmic; that stretch reads RAIPFKSKT. Phosphoserine is present on serine 285.

The protein belongs to the MIP/aquaporin (TC 1.A.8) family. PIP (TC 1.A.8.11) subfamily. In terms of tissue distribution, predominantly expressed in green siliques. Also expressed above ground, in roots and flower buds.

The protein resides in the cell membrane. Its function is as follows. Aquaporins facilitate the transport of water and small neutral solutes across cell membranes. The chain is Probable aquaporin PIP1-5 (PIP1-5) from Arabidopsis thaliana (Mouse-ear cress).